Reading from the N-terminus, the 674-residue chain is MSKVFSLSSGFSPAGDQPTAINQLLEGLDSGLAHQTLLGVTGSGKTFTIANVIAESNRPTFIMAPNKTLAAQLYGEMKEFFPDNAVEYFVSYYDYYQPEAYVPTTDTFIEKDASVNAHIEQMRLSATKALLERRDVIIIASVSAIYGLGDPDSYLKMMLHVRRGDMLNQRDILRRLAELQYTRNDVSFERGHFRVRGEVIDVFPAESEHDAIRIELFDDEVECINVFDPLTGAVLQKDLPRCTIYPKTHYVTPREKILEAIEKIKDELVVRRKQLMDSNKLVEEQRISQRTQFDIEMMNELGFCSGIENYSRYLSGREEGEPPPTLFDYLPADGLLIIDESHVTVSQIGAMYRGDRSRKENLVEYGFRLPSALDNRPMKFEEFASLAPQTIYVSATPGKYEIEQSGNDIAEQVVRPTGLLDPIIEVRPVATQVDDLLSEIRIREVKGERVLVTTLTKRMSEDLAEYLAEHNVKVRYLHSDIDTVERVEIIRDLRLGVFDVLVGINLLREGLDIPEVSLVAILDADKEGFLRSERSLIQTIGRAARNLEGRAILYGDKITGSMERAIFETNRRREKQALHNKKNGITPQGLNKKVGDILELGKPSSRSRTNKAAQLNRVAESKGTYVNLSPQQLELEIQRLETEMYDLAQNLEFEKAAEARDKIHTLRQQFIMNS.

In terms of domain architecture, Helicase ATP-binding spans 26–414; sequence EGLDSGLAHQ…SGNDIAEQVV (389 aa). Residue 39-46 participates in ATP binding; sequence GVTGSGKT. Positions 92 to 115 match the Beta-hairpin motif; sequence YYDYYQPEAYVPTTDTFIEKDASV. The Helicase C-terminal domain occupies 432-586; that stretch reads QVDDLLSEIR…ALHNKKNGIT (155 aa). A UVR domain is found at 634-669; it reads ELEIQRLETEMYDLAQNLEFEKAAEARDKIHTLRQQ.

This sequence belongs to the UvrB family. Forms a heterotetramer with UvrA during the search for lesions. Interacts with UvrC in an incision complex.

The protein resides in the cytoplasm. Functionally, the UvrABC repair system catalyzes the recognition and processing of DNA lesions. A damage recognition complex composed of 2 UvrA and 2 UvrB subunits scans DNA for abnormalities. Upon binding of the UvrA(2)B(2) complex to a putative damaged site, the DNA wraps around one UvrB monomer. DNA wrap is dependent on ATP binding by UvrB and probably causes local melting of the DNA helix, facilitating insertion of UvrB beta-hairpin between the DNA strands. Then UvrB probes one DNA strand for the presence of a lesion. If a lesion is found the UvrA subunits dissociate and the UvrB-DNA preincision complex is formed. This complex is subsequently bound by UvrC and the second UvrB is released. If no lesion is found, the DNA wraps around the other UvrB subunit that will check the other stand for damage. The polypeptide is UvrABC system protein B (Photobacterium profundum (strain SS9)).